Here is a 464-residue protein sequence, read N- to C-terminus: tRNA modification GTPase MnmE (464 aa).

3 residues coordinate (6S)-5-formyl-5,6,7,8-tetrahydrofolate: arginine 25, glutamate 87, and lysine 130. Residues 226–386 (GLSVVLAGQP…LRAELLRIAG (161 aa)) enclose the TrmE-type G domain. K(+) is bound at residue asparagine 236. GTP is bound by residues 236-241 (NVGKSS), 255-261 (TPIAGTT), and 280-283 (DTAG). Serine 240 lines the Mg(2+) pocket. 3 residues coordinate K(+): threonine 255, isoleucine 257, and threonine 260. Threonine 261 is a binding site for Mg(2+). Lysine 464 is a (6S)-5-formyl-5,6,7,8-tetrahydrofolate binding site.

Belongs to the TRAFAC class TrmE-Era-EngA-EngB-Septin-like GTPase superfamily. TrmE GTPase family. Homodimer. Heterotetramer of two MnmE and two MnmG subunits. Requires K(+) as cofactor.

It is found in the cytoplasm. Exhibits a very high intrinsic GTPase hydrolysis rate. Involved in the addition of a carboxymethylaminomethyl (cmnm) group at the wobble position (U34) of certain tRNAs, forming tRNA-cmnm(5)s(2)U34. This chain is tRNA modification GTPase MnmE, found in Burkholderia orbicola (strain AU 1054).